Here is a 230-residue protein sequence, read N- to C-terminus: Iron-dependent repressor IdeR (230 aa).

Residues 4 to 65 (LVDTTEMYLR…VAGDRHLELT (62 aa)) enclose the HTH dtxR-type domain.

This sequence belongs to the DtxR/MntR family. Homodimer.

The protein localises to the cytoplasm. Functionally, metal-dependent DNA-binding protein that controls transcription of many genes involved in iron metabolism. The sequence is that of Iron-dependent repressor IdeR (ideR) from Mycobacterium bovis (strain ATCC BAA-935 / AF2122/97).